The chain runs to 155 residues: Small ribosomal subunit protein uS7 (155 aa).

This sequence belongs to the universal ribosomal protein uS7 family. In terms of assembly, part of the 30S ribosomal subunit. Contacts proteins S9 and S11.

One of the primary rRNA binding proteins, it binds directly to 16S rRNA where it nucleates assembly of the head domain of the 30S subunit. Is located at the subunit interface close to the decoding center, probably blocks exit of the E-site tRNA. This chain is Small ribosomal subunit protein uS7, found in Malacoplasma penetrans (strain HF-2) (Mycoplasma penetrans).